The primary structure comprises 106 residues: Protein S40-3 (106 aa).

The interval 1–65 is disordered; the sequence is MSEEFQESEV…TEEEGEMTPP (65 aa). The segment covering 16–41 has biased composition (basic and acidic residues); sequence SFTRKDNKISHNNENYERKSTEKDKI.

Belongs to the senescence regulator S40 family.

The protein localises to the nucleus. In terms of biological role, regulates senescence either by modulating WRKY53 or by activating SAG12. Affects the natural variation of cyst nematodes sex ratio and susceptibility to parasitic nematodes, depending on single nucleotide polymorphism (SNPs) between cultivars. The sequence is that of Protein S40-3 from Arabidopsis thaliana (Mouse-ear cress).